Reading from the N-terminus, the 86-residue chain is NAD(P)H-quinone oxidoreductase subunit O (86 aa).

Belongs to the complex I NdhO subunit family. As to quaternary structure, NDH-1 can be composed of about 15 different subunits; different subcomplexes with different compositions have been identified which probably have different functions.

It localises to the cellular thylakoid membrane. The catalysed reaction is a plastoquinone + NADH + (n+1) H(+)(in) = a plastoquinol + NAD(+) + n H(+)(out). It carries out the reaction a plastoquinone + NADPH + (n+1) H(+)(in) = a plastoquinol + NADP(+) + n H(+)(out). NDH-1 shuttles electrons from an unknown electron donor, via FMN and iron-sulfur (Fe-S) centers, to quinones in the respiratory and/or the photosynthetic chain. The immediate electron acceptor for the enzyme in this species is believed to be plastoquinone. Couples the redox reaction to proton translocation, and thus conserves the redox energy in a proton gradient. Cyanobacterial NDH-1 also plays a role in inorganic carbon-concentration. In Prochlorococcus marinus (strain SARG / CCMP1375 / SS120), this protein is NAD(P)H-quinone oxidoreductase subunit O.